The sequence spans 455 residues: Protein indeterminate-domain 7 (455 aa).

Residues 1 to 52 (MMMNRDILFHQQQQQQMEENMSNLTSASGDQASVSSGNRTETSGSNINQHHQ) are disordered. Over residues 17-49 (MEENMSNLTSASGDQASVSSGNRTETSGSNINQ) the composition is skewed to polar residues. At serine 82 the chain carries Phosphoserine. C2H2-type zinc fingers lie at residues 92 to 114 (FICE…KRGH) and 134 to 164 (YVCP…FRKH). Positions 156 to 163 (IKKHFFRK) match the Nuclear localization signal motif. The C2H2-type 2; degenerate zinc-finger motif lies at 169–192 (WKCEKCSKKYAVQSDWKAHAKTCG). The Zn(2+) site is built by cysteine 171, cysteine 174, histidine 187, cysteine 191, cysteine 198, cysteine 200, histidine 213, and cysteine 217. The CCHC-type 2; atypical zinc finger occupies 196-219 (YKCDCGTLFSRRDSFITHRAFCDA). Residues 206–218 (RRDSFITHRAFCD) form an SHR-binding region. Positions 235–351 (QASNSPHHHH…PEEEERSSRS (117 aa)) are disordered. Low complexity-rich tracts occupy residues 248 to 265 (QQNI…SNSN) and 288 to 299 (SSNPNPNGNNGN).

It localises to the nucleus. In terms of biological role, probable transcription factor. The polypeptide is Protein indeterminate-domain 7 (Arabidopsis thaliana (Mouse-ear cress)).